Consider the following 256-residue polypeptide: Pimeloyl-[acyl-carrier protein] methyl ester esterase (256 aa).

An AB hydrolase-1 domain is found at 15 to 242 (HLVLLHGWGL…AAHAPFISHP (228 aa)). Substrate is bound by residues Trp22, 82–83 (SL), and 143–147 (FLALQ). The Nucleophile role is filled by Ser82. Catalysis depends on residues Asp207 and His235. Substrate is bound at residue His235.

The protein belongs to the AB hydrolase superfamily. Carboxylesterase BioH family. Monomer.

It localises to the cytoplasm. The enzyme catalyses 6-carboxyhexanoyl-[ACP] methyl ester + H2O = 6-carboxyhexanoyl-[ACP] + methanol + H(+). It functions in the pathway cofactor biosynthesis; biotin biosynthesis. Functionally, the physiological role of BioH is to remove the methyl group introduced by BioC when the pimeloyl moiety is complete. It allows to synthesize pimeloyl-ACP via the fatty acid synthetic pathway through the hydrolysis of the ester bonds of pimeloyl-ACP esters. This is Pimeloyl-[acyl-carrier protein] methyl ester esterase from Shigella boydii serotype 4 (strain Sb227).